The chain runs to 389 residues: Apicidin F cluster transcription factor apf2 (389 aa).

2 stretches are compositionally biased toward polar residues: residues Met-1–Asp-13 and Pro-75–Leu-84. 3 disordered regions span residues Met-1–Arg-27, Pro-65–Leu-84, and Glu-219–Pro-239. A basic DNA-binding region region spans residues Thr-12–Glu-38. ANK repeat units lie at residues Glu-241–Thr-270, His-274–Met-303, Ser-307–Arg-336, and Gln-357–Ile-386.

This sequence belongs to the bZIP family. Highly divergent.

The protein localises to the nucleus. Transcription factor that regulates the expression of the gene cluster that mediates the biosynthesis of apicidin F. Binds to the eight-base-pair motif 5'-TGACGTGA-3' called the 'Api-box' that is found in all promoters of the apicidin F cluster except in the promoter region of apf2 itself. The sequence is that of Apicidin F cluster transcription factor apf2 from Gibberella fujikuroi (strain CBS 195.34 / IMI 58289 / NRRL A-6831) (Bakanae and foot rot disease fungus).